Consider the following 364-residue polypeptide: Phosphoserine aminotransferase (364 aa).

An L-glutamate-binding site is contributed by arginine 42. Residues 76-77, tryptophan 100, threonine 150, aspartate 169, and glutamine 192 each bind pyridoxal 5'-phosphate; that span reads AS. An N6-(pyridoxal phosphate)lysine modification is found at lysine 193. Residue 234-235 participates in pyridoxal 5'-phosphate binding; it reads NT.

The protein belongs to the class-V pyridoxal-phosphate-dependent aminotransferase family. SerC subfamily. As to quaternary structure, homodimer. It depends on pyridoxal 5'-phosphate as a cofactor.

The protein resides in the cytoplasm. The enzyme catalyses O-phospho-L-serine + 2-oxoglutarate = 3-phosphooxypyruvate + L-glutamate. The catalysed reaction is 4-(phosphooxy)-L-threonine + 2-oxoglutarate = (R)-3-hydroxy-2-oxo-4-phosphooxybutanoate + L-glutamate. The protein operates within amino-acid biosynthesis; L-serine biosynthesis; L-serine from 3-phospho-D-glycerate: step 2/3. Catalyzes the reversible conversion of 3-phosphohydroxypyruvate to phosphoserine and of 3-hydroxy-2-oxo-4-phosphonooxybutanoate to phosphohydroxythreonine. The chain is Phosphoserine aminotransferase from Shouchella clausii (strain KSM-K16) (Alkalihalobacillus clausii).